The primary structure comprises 496 residues: Beta-amylase (496 aa).

Positions 54, 94, and 102 each coordinate substrate. The active-site Proton donor is the Glu-187. The substrate site is built by Lys-296, His-301, and Thr-343. The active-site Proton acceptor is the Glu-381. Substrate is bound by residues 382-383 (NA) and Arg-421. The interval 455–496 (YNHGIPPLKRSGPKIPDDVLNEATKPIPPFPWDSETDMKVDG) is disordered.

It belongs to the glycosyl hydrolase 14 family.

The enzyme catalyses Hydrolysis of (1-&gt;4)-alpha-D-glucosidic linkages in polysaccharides so as to remove successive maltose units from the non-reducing ends of the chains.. This Medicago sativa (Alfalfa) protein is Beta-amylase (BMY1).